Here is a 28-residue protein sequence, read N- to C-terminus: uncharacterized protein (28 aa).

This is an uncharacterized protein from Saccharomyces cerevisiae (strain ATCC 204508 / S288c) (Baker's yeast).